A 75-amino-acid polypeptide reads, in one-letter code: Putative defensin-like protein 55 (75 aa).

The first 19 residues, 1 to 19 (MNITKAYVIFFLVVILTNS), serve as a signal peptide directing secretion. Disulfide bonds link Cys-39-Cys-73, Cys-43-Cys-66, Cys-52-Cys-71, and Cys-56-Cys-72.

It belongs to the DEFL family.

The protein localises to the secreted. This is Putative defensin-like protein 55 from Arabidopsis thaliana (Mouse-ear cress).